The primary structure comprises 210 residues: Large ribosomal subunit protein uL4 (210 aa).

A disordered region spans residues 56–80 (FVSGGGKKPWRQKGTGRARAGSTRS).

It belongs to the universal ribosomal protein uL4 family. As to quaternary structure, part of the 50S ribosomal subunit.

In terms of biological role, one of the primary rRNA binding proteins, this protein initially binds near the 5'-end of the 23S rRNA. It is important during the early stages of 50S assembly. It makes multiple contacts with different domains of the 23S rRNA in the assembled 50S subunit and ribosome. Functionally, forms part of the polypeptide exit tunnel. The polypeptide is Large ribosomal subunit protein uL4 (Solidesulfovibrio magneticus (strain ATCC 700980 / DSM 13731 / RS-1) (Desulfovibrio magneticus)).